A 957-amino-acid chain; its full sequence is Vacuolar membrane protease (957 aa).

Residues 1-10 (MARYNPFSFT) lie on the Cytoplasmic side of the membrane. A helical membrane pass occupies residues 11–31 (PGPVVFFTTVIYVGLFAALLV). Over 32 to 369 (THLTVPDYPS…RVFVVFQLHT (338 aa)) the chain is Vacuolar. N48, N105, and N136 each carry an N-linked (GlcNAc...) asparagine glycan. Residues H152 and D164 each coordinate Zn(2+). E198 functions as the Proton acceptor in the catalytic mechanism. Residues E199, E224, and H297 each contribute to the Zn(2+) site. Residues 370–390 (LFALCVTLLVVAPIALIGLTF) form a helical membrane-spanning segment. Residues 391-423 (GLSKADKNYLLARKAFVYSSDDDNPVQLYGWRG) lie on the Cytoplasmic side of the membrane. The chain crosses the membrane as a helical span at residues 424–444 (FFRFPIVFVSATAVVVALAYL). The Vacuolar segment spans residues 445–450 (LVRFNA). The chain crosses the membrane as a helical span at residues 451-471 (FIIYSSPFAVWSMMLSAWFFV). Residues 472 to 490 (AWFFSRGADAMRPSALQRM) lie on the Cytoplasmic side of the membrane. The chain crosses the membrane as a helical span at residues 491–511 (YALIWLFIGSFVLLTIITVFV). At 512–521 (NNYQVVAGYP) the chain is on the vacuolar side. The chain crosses the membrane as a helical span at residues 522-542 (ALFYFAVVFAALMLSYLELFF). The Cytoplasmic segment spans residues 543–642 (APTKSAYARH…YPGEQEWSGK (100 aa)). 2 disordered regions span residues 560–591 (RRNS…DATE) and 603–628 (FTRY…RRLD). Over residues 564-577 (ESASRPLTGSTTAA) the composition is skewed to polar residues. The helical transmembrane segment at 643-663 (LPSWIWIIQLLLLAPLVIVLV) threads the bilayer. The Vacuolar segment spans residues 664–685 (GQVALLLTSALYQTPSDGNSPL). Residues 686–706 (FIYLAIAALSVLLLAPTGPFI) form a helical membrane-spanning segment. Residues 707-713 (HRFTYHV) are Cytoplasmic-facing. The chain crosses the membrane as a helical span at residues 714–734 (PTFLFLVCLATVIYNLVAFPF). The Vacuolar segment spans residues 735–957 (SRDHRLKVYF…LVEGFKQFEI (223 aa)). N-linked (GlcNAc...) asparagine glycans are attached at residues N782, N818, and N834.

It belongs to the peptidase M28 family. Requires Zn(2+) as cofactor.

The protein resides in the vacuole membrane. May be involved in vacuolar sorting and osmoregulation. The chain is Vacuolar membrane protease from Pyrenophora tritici-repentis (strain Pt-1C-BFP) (Wheat tan spot fungus).